We begin with the raw amino-acid sequence, 476 residues long: Zinc transporter SLC39A7 (476 aa).

The chain crosses the membrane as a helical span at residues 7 to 27 (APHWVAVGLLTWAALGLLVAG). Positions 35–109 (HKDVEEDFHG…SHGHSHDSLH (75 aa)) are enriched in basic and acidic residues. The tract at residues 35 to 131 (HKDVEEDFHG…HGTSREAGAP (97 aa)) is disordered. H73 is subject to Pros-methylhistidine. Basic residues predominate over residues 110-120 (HGGHGHAHREH). 3 helical membrane passes run 146-166 (ALGATVLISAAPFFVLFLIPV), 177-197 (LQILLSFASGGLLGDAFLHLI), and 222-242 (GPILSVGLWVLSGIVAFLVVE). The segment at 249 to 320 (KGGHGHSHGH…QSPEEEKAGS (72 aa)) is disordered. A compositionally biased stretch (basic and acidic residues) spans 257–292 (GHGDRHAHGDSHTHGDRHECSSKEKPSTEEEKEVGG). S283 carries the phosphoserine modification. A run of 2 helical transmembrane segments spans residues 393 to 413 (VTAIGALAGTACALLTEGGAV) and 417 to 437 (VAGGAGPGWVLPFTAGGFIYV).

The protein belongs to the ZIP transporter (TC 2.A.5) family. KE4/Catsup subfamily. Homodimer. Post-translationally, methylation at some His residue by METTL9 leads to reduced zinc-binding. Rapidly phosphorylated by CK2 following Zn(2+) treatment. This phosphorylation is required for efficient cytosolic Zn(2+) release. In terms of tissue distribution, widely expressed. Highly expressed in the intestinal crypts.

The protein resides in the endoplasmic reticulum membrane. It is found in the golgi apparatus. It localises to the cis-Golgi network membrane. It carries out the reaction Zn(2+)(in) = Zn(2+)(out). Functionally, transports Zn(2+) from the endoplasmic reticulum (ER)/Golgi apparatus to the cytosol, playing an essential role in the regulation of cytosolic zinc levels. Acts as a gatekeeper of zinc release from intracellular stores, requiring post-translational activation by phosphorylation, resulting in activation of multiple downstream pathways leading to cell growth and proliferation. Has an essential role in B cell development and is required for proper B cell receptor signaling. Plays an important role in maintaining intestinal epithelial homeostasis and skin dermis development by regulating ER function. Controls cell signaling pathways involved in glucose metabolism in skeletal muscle. Has a protective role against ER stress in different biological contexts. Mediates Zn(2+)-induced ferroptosis. The protein is Zinc transporter SLC39A7 (Slc39a7) of Mus musculus (Mouse).